A 437-amino-acid chain; its full sequence is Glutamate-1-semialdehyde 2,1-aminomutase (437 aa).

Lys-273 is modified (N6-(pyridoxal phosphate)lysine).

Belongs to the class-III pyridoxal-phosphate-dependent aminotransferase family. HemL subfamily. In terms of assembly, homodimer. Pyridoxal 5'-phosphate is required as a cofactor.

It localises to the cytoplasm. It carries out the reaction (S)-4-amino-5-oxopentanoate = 5-aminolevulinate. It participates in porphyrin-containing compound metabolism; protoporphyrin-IX biosynthesis; 5-aminolevulinate from L-glutamyl-tRNA(Glu): step 2/2. The polypeptide is Glutamate-1-semialdehyde 2,1-aminomutase (Chlamydia caviae (strain ATCC VR-813 / DSM 19441 / 03DC25 / GPIC) (Chlamydophila caviae)).